The following is a 614-amino-acid chain: Bifunctional 3'-phosphoadenosine 5'-phosphosulfate synthase 2 (614 aa).

Residues Met-1–Ile-215 form an adenylyl-sulfate kinase region. Gly-52 to Thr-57 is an ATP binding site. Adenosine 5'-phosphosulfate-binding positions include Asp-79 to Arg-82, Phe-91, Arg-96 to Asn-99, Ile-122 to Ser-123, Lys-161, and Gly-174 to Phe-175. Residues Ser-197, Gln-409–Asn-412, Gly-511–Ala-515, and Ala-553 each bind ATP. Residues Ile-224–Asn-614 are sulfate adenylyltransferase.

In the N-terminal section; belongs to the APS kinase family. The protein in the C-terminal section; belongs to the sulfate adenylyltransferase family. Expressed in cartilage and adrenal gland.

The enzyme catalyses sulfate + ATP + H(+) = adenosine 5'-phosphosulfate + diphosphate. It catalyses the reaction adenosine 5'-phosphosulfate + ATP = 3'-phosphoadenylyl sulfate + ADP + H(+). The protein operates within sulfur metabolism; sulfate assimilation. Functionally, bifunctional enzyme with both ATP sulfurylase and APS kinase activity, which mediates two steps in the sulfate activation pathway. The first step is the transfer of a sulfate group to ATP to yield adenosine 5'-phosphosulfate (APS), and the second step is the transfer of a phosphate group from ATP to APS yielding 3'-phosphoadenylylsulfate/PAPS, the activated sulfate donor used by sulfotransferases. In mammals, PAPS is the sole source of sulfate while APS appears to only be an intermediate in the sulfate-activation pathway. Plays indirectly an important role in skeletogenesis during postnatal growth. This chain is Bifunctional 3'-phosphoadenosine 5'-phosphosulfate synthase 2 (PAPSS2), found in Homo sapiens (Human).